Reading from the N-terminus, the 421-residue chain is Glucose-1-phosphate adenylyltransferase (421 aa).

Alpha-D-glucose 1-phosphate contacts are provided by residues Tyr109, Gly175, 190-191 (EK), and Ser208.

The protein belongs to the bacterial/plant glucose-1-phosphate adenylyltransferase family. Homotetramer.

It catalyses the reaction alpha-D-glucose 1-phosphate + ATP + H(+) = ADP-alpha-D-glucose + diphosphate. Its pathway is glycan biosynthesis; glycogen biosynthesis. Its function is as follows. Involved in the biosynthesis of ADP-glucose, a building block required for the elongation reactions to produce glycogen. Catalyzes the reaction between ATP and alpha-D-glucose 1-phosphate (G1P) to produce pyrophosphate and ADP-Glc. In Teredinibacter turnerae (strain ATCC 39867 / T7901), this protein is Glucose-1-phosphate adenylyltransferase.